Here is a 649-residue protein sequence, read N- to C-terminus: Cysteine-rich receptor-like protein kinase 2 (649 aa).

The first 29 residues, 1-29 (MKKEPVHILPLYLPCLLMFLLSSLRQITG), serve as a signal peptide directing secretion. Residues 30–258 (DARARAVKVT…IPRNGRSRGS (229 aa)) lie on the Extracellular side of the membrane. Gnk2-homologous domains lie at 33-134 (ARAV…NYSF) and 139-245 (KGPE…DQDF). 5 N-linked (GlcNAc...) asparagine glycosylation sites follow: Asn-47, Asn-131, Asn-149, Asn-154, and Asn-214. The chain crosses the membrane as a helical span at residues 259–279 (VVVIVVSVLSSVVVFMIGVAV). Over 280–649 (SVYICKRRTI…TVSQSSFYGR (370 aa)) the chain is Cytoplasmic. The Protein kinase domain maps to 325-608 (FDNANKLGQG…HMLKNKEEVL (284 aa)). Residues 331–339 (LGQGGFGTV) and Lys-353 each bind ATP. Tyr-398 carries the phosphotyrosine modification. Asp-450 functions as the Proton acceptor in the catalytic mechanism. Ser-454 and Ser-483 each carry phosphoserine. Thr-484 and Thr-489 each carry phosphothreonine. Tyr-497 is modified (phosphotyrosine).

The protein belongs to the protein kinase superfamily. Ser/Thr protein kinase family. CRK subfamily.

Its subcellular location is the membrane. It carries out the reaction L-seryl-[protein] + ATP = O-phospho-L-seryl-[protein] + ADP + H(+). It catalyses the reaction L-threonyl-[protein] + ATP = O-phospho-L-threonyl-[protein] + ADP + H(+). In Arabidopsis thaliana (Mouse-ear cress), this protein is Cysteine-rich receptor-like protein kinase 2 (CRK2).